Reading from the N-terminus, the 229-residue chain is 5'-methylthioadenosine/S-adenosylhomocysteine nucleosidase (229 aa).

The active-site Proton acceptor is the glutamate 12. Residues glycine 78, isoleucine 152, and 173 to 174 (ME) each bind substrate. Aspartate 197 serves as the catalytic Proton donor.

It belongs to the PNP/UDP phosphorylase family. MtnN subfamily.

It catalyses the reaction S-adenosyl-L-homocysteine + H2O = S-(5-deoxy-D-ribos-5-yl)-L-homocysteine + adenine. The catalysed reaction is S-methyl-5'-thioadenosine + H2O = 5-(methylsulfanyl)-D-ribose + adenine. It carries out the reaction 5'-deoxyadenosine + H2O = 5-deoxy-D-ribose + adenine. Its pathway is amino-acid biosynthesis; L-methionine biosynthesis via salvage pathway; S-methyl-5-thio-alpha-D-ribose 1-phosphate from S-methyl-5'-thioadenosine (hydrolase route): step 1/2. Catalyzes the irreversible cleavage of the glycosidic bond in both 5'-methylthioadenosine (MTA) and S-adenosylhomocysteine (SAH/AdoHcy) to adenine and the corresponding thioribose, 5'-methylthioribose and S-ribosylhomocysteine, respectively. Also cleaves 5'-deoxyadenosine, a toxic by-product of radical S-adenosylmethionine (SAM) enzymes, into 5-deoxyribose and adenine. The chain is 5'-methylthioadenosine/S-adenosylhomocysteine nucleosidase from Histophilus somni (strain 129Pt) (Haemophilus somnus).